The chain runs to 313 residues: Porphobilinogen deaminase (313 aa).

C240 carries the S-(dipyrrolylmethanemethyl)cysteine modification.

The protein belongs to the HMBS family. As to quaternary structure, monomer. The cofactor is dipyrromethane.

The catalysed reaction is 4 porphobilinogen + H2O = hydroxymethylbilane + 4 NH4(+). Its pathway is porphyrin-containing compound metabolism; protoporphyrin-IX biosynthesis; coproporphyrinogen-III from 5-aminolevulinate: step 2/4. Functionally, tetrapolymerization of the monopyrrole PBG into the hydroxymethylbilane pre-uroporphyrinogen in several discrete steps. The polypeptide is Porphobilinogen deaminase (Moorella thermoacetica (strain ATCC 39073 / JCM 9320)).